We begin with the raw amino-acid sequence, 201 residues long: LexA repressor 1 (201 aa).

Positions leucine 27 to glutamine 47 form a DNA-binding region, H-T-H motif. Catalysis depends on for autocatalytic cleavage activity residues serine 122 and lysine 159.

The protein belongs to the peptidase S24 family. In terms of assembly, homodimer.

The catalysed reaction is Hydrolysis of Ala-|-Gly bond in repressor LexA.. Its function is as follows. Represses a number of genes involved in the response to DNA damage (SOS response), including recA and lexA. In the presence of single-stranded DNA, RecA interacts with LexA causing an autocatalytic cleavage which disrupts the DNA-binding part of LexA, leading to derepression of the SOS regulon and eventually DNA repair. This chain is LexA repressor 1, found in Xanthomonas axonopodis pv. citri (strain 306).